Here is a 201-residue protein sequence, read N- to C-terminus: Large ribosomal subunit protein uL4 (201 aa).

Residues 45–73 are disordered; the sequence is AQKTRAEVTGSGKKPWRQKGTGRARAGSV.

This sequence belongs to the universal ribosomal protein uL4 family. As to quaternary structure, part of the 50S ribosomal subunit.

In terms of biological role, one of the primary rRNA binding proteins, this protein initially binds near the 5'-end of the 23S rRNA. It is important during the early stages of 50S assembly. It makes multiple contacts with different domains of the 23S rRNA in the assembled 50S subunit and ribosome. Functionally, forms part of the polypeptide exit tunnel. This is Large ribosomal subunit protein uL4 from Yersinia pseudotuberculosis serotype O:1b (strain IP 31758).